An 87-amino-acid polypeptide reads, in one-letter code: Insertion element IS407 uncharacterized 10.0 kDa protein (87 aa).

This sequence belongs to the transposase 8 family.

The sequence is that of Insertion element IS407 uncharacterized 10.0 kDa protein from Burkholderia multivorans (strain ATCC 17616 / 249).